Consider the following 2258-residue polypeptide: Coagulation factor V (2258 aa).

Positions 1–22 (MFPALPCPWVLVVLGTSWAAWG) are cleaved as a signal peptide. Plastocyanin-like domains are found at residues 30–193 (RVRQ…LLIC), 203–329 (IQKM…IKNC), 348–525 (KRWE…LLIC), and 535–683 (IQRT…DVKC). F5/8 type A domains follow at residues 30 to 329 (RVRQ…IKNC) and 348 to 683 (KRWE…DVKC). Ca(2+) is bound by residues D139 and D140. An N-linked (GlcNAc...) asparagine glycan is attached at N153. A disulfide bridge connects residues C167 and C193. 6 N-linked (GlcNAc...) asparagine glycosylation sites follow: N225, N239, N297, N382, N460, and N467. C248 and C329 form a disulfide bridge. A disulfide bridge connects residues C499 and C525. N553 is a glycosylation site (N-linked (GlcNAc...) asparagine). C602 and C683 are joined by a disulfide. T639 carries the post-translational modification Phosphothreonine. The b stretch occupies residues 691 to 1611 (SYEIIYEPSS…PDNIAAWYLR (921 aa)). A sulfotyrosine mark is found at Y692 and Y696. The disordered stretch occupies residues 703–723 (TLTTRKMHDSSENKEEENDDE). Y724 and Y726 each carry sulfotyrosine. A propeptide spans 738 to 1611 (SFRNSSLYQE…PDNIAAWYLR (874 aa)) (activation peptide (connecting region)). N741 carries an N-linked (GlcNAc...) asparagine glycan. At Y745 the chain carries Sulfotyrosine. Residues N752, N760, N776, N782, N899, and N960 are each glycosylated (N-linked (GlcNAc...) asparagine). The segment at 764–790 (FIPPSTDRAVDSNSSSPGNISRAPANT) is disordered. Polar residues predominate over residues 774–790 (DSNSSSPGNISRAPANT). The segment covering 1013–1022 (RKKKERKPVH) has biased composition (basic residues). The segment at 1013–1035 (RKKKERKPVHHVPLSPRSFNPLR) is disordered. N1048, N1057, N1066, N1073, N1089, and N1174 each carry an N-linked (GlcNAc...) asparagine glycan. Composition is skewed to polar residues over residues 1167–1188 (RTTS…TTLS), 1198–1240 (PDLS…SQTT), and 1252–1269 (PDLG…TTLS). Disordered stretches follow at residues 1167–1240 (RTTS…SQTT) and 1252–1334 (PDLG…LSPD). Tandem repeats lie at residues 1168–1176 (TTSPDLNQT), 1177–1185 (SLSPELSQT), 1186–1194 (TLSPDPGHV), 1195–1203 (TLSPDLSQT), 1204–1212 (TLSPDLSHT), 1213–1221 (TLSPDLGHT), 1222–1230 (TLSPDLSHT), 1231–1239 (TLSPDLSQT), 1240–1248 (TLSPDLSHT), 1249–1257 (TLSPDLGHT), 1258–1266 (TLSPDLSHT), 1267–1275 (TLSPDLGHA), 1276–1284 (TLSPDLSHT), 1285–1293 (TLSPDLGHT), 1294–1302 (TLSPDLGHT), 1303–1311 (TLSPDFSQT), 1312–1320 (TLSPDLGHT), 1321–1329 (TLSSDVSHT), 1330–1338 (TLSPDLSHT), 1339–1347 (TLSPDLSHT), 1348–1356 (TLSPDLGHT), 1357–1365 (TLSPDLSQT), 1366–1374 (TLSPDLGHM), 1375–1383 (TLSPDLSHT), 1384–1392 (TLSPDLGHT), 1393–1401 (TLSPDLSHT), 1402–1410 (TLSPDLGHM), 1411–1419 (TLSPDLGQT), 1420–1428 (TLSLDFGQT), 1429–1437 (TLSPDLSHM), 1438–1446 (TLSSELSHE), 1447–1455 (TLSPDLSQV), 1456–1464 (TLSPDLSEI), 1465–1473 (PFSPDLWQT), 1474–1482 (TLSSDLNET), 1483–1491 (TLSPDLRQT), 1492–1500 (SPHPDPDKT), 1501–1509 (SYISESSQS), 1510–1518 (VTLPEFGQT), 1519–1527 (SPFPDLGQR), and 1531–1539 (PSHSTLNNT). The segment at 1168-1539 (TTSPDLNQTS…PPSHSTLNNT (372 aa)) is 41 X 9 AA approximate tandem repeats of T-L-S-P-D-L-[GS]-[HQ]-T. Residues 1302–1334 (TTLSPDFSQTTLSPDLGHTTLSSDVSHTTLSPD) show a composition bias toward polar residues. The N-linked (GlcNAc...) asparagine glycan is linked to N1480. 2 stretches are compositionally biased toward polar residues: residues 1482–1493 (TTLSPDLRQTSP) and 1501–1520 (SYIS…QTSP). The segment at 1482–1539 (TTLSPDLRQTSPHPDPDKTSYISESSQSVTLPEFGQTSPFPDLGQRPSPPSHSTLNNT) is disordered. N-linked (GlcNAc...) asparagine glycosylation is present at N1537. Sulfotyrosine occurs at positions 1560, 1576, 1581, 1584, and 1588. Residue N1597 is glycosylated (N-linked (GlcNAc...) asparagine). Plastocyanin-like domains lie at 1616-1785 (NRRN…LLIC) and 1795-1941 (NMPV…DREC). Positions 1616–1941 (NRRNYYIAAE…TPFLIIDREC (326 aa)) constitute an F5/8 type A 3 domain. Position 1631 is a sulfotyrosine (Y1631). N1737 is a glycosylation site (N-linked (GlcNAc...) asparagine). A disulfide bond links C1759 and C1785. The Cu cation site is built by H1877 and H1879. An N-linked (GlcNAc...) asparagine glycan is attached at N1886. D1919 contributes to the Cu cation binding site. 2 disulfide bridges follow: C1941–C2095 and C2100–C2255. F5/8 type C domains lie at 1941–2095 (CKMP…LQGC) and 2100–2255 (CSTP…LFGC). Residues N2044 and N2243 are each glycosylated (N-linked (GlcNAc...) asparagine).

The protein belongs to the multicopper oxidase family. As to quaternary structure, factor Va, the activated form of factor V, is composed of a heavy chain and a light chain, non-covalently bound. The interaction between the two chains is calcium-dependent. Forms heterodimer with SERPINA5. Thrombin activates factor V proteolytically to the active cofactor, factor Va (formation of a heavy chain at the N-terminus and a light chain at the C-terminus).

The protein localises to the secreted. Its activity is regulated as follows. Inhibited by SERPINA5. Its function is as follows. Coagulation factor V is a cofactor that participates with factor Xa to activate prothrombin to thrombin. The protein is Coagulation factor V (F5) of Sus scrofa (Pig).